Reading from the N-terminus, the 357-residue chain is tRNA N6-adenosine threonylcarbamoyltransferase (357 aa).

Residues histidine 120 and histidine 124 each coordinate Fe cation. Substrate contacts are provided by residues leucine 143–glycine 147, aspartate 176, glycine 189, and asparagine 289. Aspartate 317 lines the Fe cation pocket.

Belongs to the KAE1 / TsaD family. The cofactor is Fe(2+).

The protein resides in the cytoplasm. It catalyses the reaction L-threonylcarbamoyladenylate + adenosine(37) in tRNA = N(6)-L-threonylcarbamoyladenosine(37) in tRNA + AMP + H(+). Required for the formation of a threonylcarbamoyl group on adenosine at position 37 (t(6)A37) in tRNAs that read codons beginning with adenine. Is involved in the transfer of the threonylcarbamoyl moiety of threonylcarbamoyl-AMP (TC-AMP) to the N6 group of A37, together with TsaE and TsaB. TsaD likely plays a direct catalytic role in this reaction. The polypeptide is tRNA N6-adenosine threonylcarbamoyltransferase (Polynucleobacter necessarius subsp. necessarius (strain STIR1)).